A 189-amino-acid polypeptide reads, in one-letter code: Elongation factor P (189 aa).

The protein belongs to the elongation factor P family.

The protein localises to the cytoplasm. Its pathway is protein biosynthesis; polypeptide chain elongation. In terms of biological role, involved in peptide bond synthesis. Stimulates efficient translation and peptide-bond synthesis on native or reconstituted 70S ribosomes in vitro. Probably functions indirectly by altering the affinity of the ribosome for aminoacyl-tRNA, thus increasing their reactivity as acceptors for peptidyl transferase. The sequence is that of Elongation factor P from Rhizobium radiobacter (Agrobacterium tumefaciens).